The sequence spans 3032 residues: DmX-like protein 2 (3032 aa).

3 WD repeats span residues 108–145, 167–207, and 230–278; these read FLSS…ILEE, KTSV…KSSI, and AHPR…EDCL. Residue Ser326 is modified to Phosphoserine. Residues 418 to 486 form a disordered region; the sequence is QLDHESDDAD…HPRPSISMPL (69 aa). The span at 422-434 shows a compositional bias: acidic residues; sequence ESDDADREDEERS. Positions 435–474 are enriched in basic and acidic residues; sequence QDERERGLRMKLDHELSLDRESEAGTGSSEHEDGEREGSP. Phosphoserine is present on Ser473. Residues 492–532 form a WD 4 repeat; it reads DRKIETLLTEWNKNPDMLFTIHPVDGTFLVWHVKYLDEYNP. Residues 577 to 598 form a disordered region; it reads PSQQEMMSVDSPHGSQLHSPSH. Ser587 is subject to Phosphoserine. Positions 589–598 are enriched in polar residues; that stretch reads HGSQLHSPSH. 3 WD repeats span residues 594 to 633, 750 to 802, and 879 to 921; these read HSPS…KSAF, LHTS…RKLL, and QPSQ…VQAC. The interval 937 to 958 is disordered; sequence VPGQKNLDSSPETSSSMSSVPH. Ser945 and Ser946 each carry phosphoserine. Residues 945-958 show a composition bias toward low complexity; sequence SSPETSSSMSSVPH. One copy of the WD 8 repeat lies at 1001–1038; sequence LSSSSIYPVCLAPYLVVTTCSDNKVRFWKCCMETNSLG. Residues Ser1141, Ser1144, and Ser1152 each carry the phosphoserine modification. 2 WD repeats span residues 1164–1205 and 1245–1285; these read PNIK…VSDQ and GTPS…GNVD. Phosphoserine occurs at positions 1288 and 1399. Phosphothreonine is present on Thr1416. The tract at residues 1443-1464 is disordered; sequence RISEDSTKKPQSYEDHIESQSE. Over residues 1444–1461 the composition is skewed to basic and acidic residues; it reads ISEDSTKKPQSYEDHIES. Ser1856 carries the phosphoserine modification. A disordered region spans residues 1922-1953; that stretch reads QLDSVSGRMENGPSESKPVSRSDGGSGADWSA. Residue Thr2017 is modified to Phosphothreonine. Residues 2117–2146 are a coiled coil; it reads GSYERHQIERRRLQAKREHAERRKLWLQKN. A phosphoserine mark is found at Ser2394 and Ser2636. Residues 2722–2732 show a composition bias toward low complexity; it reads QPGAASHSSSQ. The tract at residues 2722–2744 is disordered; the sequence is QPGAASHSSSQPHPPPSLPWLGS. WD repeat units lie at residues 2757 to 2796, 2800 to 2839, 2846 to 2888, 2894 to 2933, 2936 to 2975, and 2988 to 3026; these read RNLH…QLVC, AGNA…SNPK, CHSK…GNSL, CHDH…LIHT, AHDS…LIHS, and NIGA…NIPN.

As to quaternary structure, interacts with MADD and RAB3GAP. In terms of tissue distribution, expressed in the brain and pituitary gland. Detected in the hippocampus, dentate gyrus, hypothalamus, pyriform cortex and the granular and molecular layers of the cerebellum of adult animals. In the hypothalamus, expression is observed in the arcuate nucleus, the ME, the organum vasculosum of the lamina terminalis, and the subfornical organ, the subcommissural organ, and the suprachiasmatic nucleus. Both tanycytes and hypothalamic neurosecretory neurons express the protein. Expressed in the inner and outer hair cells as well as in the spiral ganglion neurons. Expressed in insulin-secreting cells of the islets of Langerhans in the pancreas.

The protein resides in the cytoplasmic vesicle. Its subcellular location is the secretory vesicle. The protein localises to the synaptic vesicle membrane. It localises to the neuronal dense core vesicle. May serve as a scaffold protein for MADD and RAB3GA on synaptic vesicles of neuronal and endocrine homeostatic processes. Plays a role in the brain as a key controller of neuronal and endocrine homeostatic processes. The chain is DmX-like protein 2 (Dmxl2) from Mus musculus (Mouse).